The following is a 54-amino-acid chain: Large ribosomal subunit protein bL33 (54 aa).

It belongs to the bacterial ribosomal protein bL33 family.

This Stenotrophomonas maltophilia (strain R551-3) protein is Large ribosomal subunit protein bL33.